A 211-amino-acid chain; its full sequence is Uracil phosphoribosyltransferase (211 aa).

5-phospho-alpha-D-ribose 1-diphosphate contacts are provided by residues R78, R103, and 130 to 138 (DPMLATGGT). Residues I195 and 200–202 (GDA) each bind uracil. D201 contacts 5-phospho-alpha-D-ribose 1-diphosphate.

The protein belongs to the UPRTase family. Mg(2+) is required as a cofactor.

It carries out the reaction UMP + diphosphate = 5-phospho-alpha-D-ribose 1-diphosphate + uracil. The protein operates within pyrimidine metabolism; UMP biosynthesis via salvage pathway; UMP from uracil: step 1/1. With respect to regulation, allosterically activated by GTP. In terms of biological role, catalyzes the conversion of uracil and 5-phospho-alpha-D-ribose 1-diphosphate (PRPP) to UMP and diphosphate. The polypeptide is Uracil phosphoribosyltransferase (Streptomyces avermitilis (strain ATCC 31267 / DSM 46492 / JCM 5070 / NBRC 14893 / NCIMB 12804 / NRRL 8165 / MA-4680)).